The following is a 64-amino-acid chain: Large ribosomal subunit protein bL28 (64 aa).

A disordered region spans residues Met-1–Ser-21.

This sequence belongs to the bacterial ribosomal protein bL28 family.

The protein is Large ribosomal subunit protein bL28 of Mycoplasma genitalium (strain ATCC 33530 / DSM 19775 / NCTC 10195 / G37) (Mycoplasmoides genitalium).